The sequence spans 269 residues: Undecaprenyl-diphosphatase (269 aa).

Transmembrane regions (helical) follow at residues 42–62 (WDTF…ALYF), 83–103 (LTVL…HGVI), 110–130 (PYLP…LLVV), 142–162 (GMAL…LSLL), 186–206 (AEFS…LDLL), 219–239 (AIAI…KFLI), and 247–267 (FTPF…LIYI).

Belongs to the UppP family.

It is found in the cell inner membrane. The enzyme catalyses di-trans,octa-cis-undecaprenyl diphosphate + H2O = di-trans,octa-cis-undecaprenyl phosphate + phosphate + H(+). Its function is as follows. Catalyzes the dephosphorylation of undecaprenyl diphosphate (UPP). Confers resistance to bacitracin. The polypeptide is Undecaprenyl-diphosphatase (Caulobacter sp. (strain K31)).